Reading from the N-terminus, the 1257-residue chain is ATP-binding cassette sub-family B member 5 (1257 aa).

A disordered region spans residues 1–24 (MENSERAEEMQENYQRNGTAEEQP). Asn-17 carries N-linked (GlcNAc...) asparagine glycosylation. A helical membrane pass occupies residues 49 to 69 (ILGILASLVNGACLPLMPLVL). One can recognise an ABC transmembrane type-1 1 domain in the interval 49–350 (ILGILASLVN…AAVPHFETFA (302 aa)). N-linked (GlcNAc...) asparagine glycans are attached at residues Asn-85 and Asn-91. The next 5 helical transmembrane spans lie at 110 to 130 (YVGI…LWII), 181 to 201 (KIAL…VGLV), 203 to 223 (GWKL…SAAA), 294 to 314 (VYFF…SLIL), and 322 to 342 (IGTV…IGAA). Residues Asn-371, Asn-390, and Asn-423 are each glycosylated (N-linked (GlcNAc...) asparagine). The 237-residue stretch at 386–622 (VEFKNVSFNY…RGLYYSLVMS (237 aa)) folds into the ABC transporter 1 domain. Residue 421–428 (GLNGSGKS) coordinates ATP. Helical transmembrane passes span 693-713 (VLGT…SIIF) and 737-757 (MIFV…GLFY). An ABC transmembrane type-1 2 domain is found at 693–980 (VLGTLASVLN…TLVLAPEYSK (288 aa)). 2 N-linked (GlcNAc...) asparagine glycosylation sites follow: Asn-789 and Asn-819. The chain crosses the membrane as a helical span at residues 827-847 (VIISFIYGWEMTFLILSIAPV). A glycan (N-linked (GlcNAc...) asparagine) is linked at Asn-910. 2 consecutive transmembrane segments (helical) span residues 917 to 937 (IIGS…AAGF) and 954 to 974 (MFIV…TLVL). Positions 1015–1253 (LEFREVSFFY…RDIYFKLVNA (239 aa)) constitute an ABC transporter 2 domain. Residue 1050–1057 (GSSGCGKS) participates in ATP binding. Residues Asn-1104 and Asn-1188 are each glycosylated (N-linked (GlcNAc...) asparagine).

It belongs to the ABC transporter superfamily. ABCB family. Multidrug resistance exporter (TC 3.A.1.201) subfamily. As to expression, expressed by CD133-expressing progenitor cells among epidermal melanocytes (at protein level). Widely expressed with specific expression in pigment cells. Highly expressed in several malignant tissues: highly expressed in clinical melanomas, with low expression in normal skin. In melanoma, marks malignant melanoma-initiating cells (MMIC), in which clinical virulence resides as a consequence of unlimited self-renewal capacity, resulting in inexorable tumor progression and metastasis. Also highly expressed in a number of leukemia cells. Expressed in basal limbal epithelium.

It is found in the cell membrane. It catalyses the reaction daunorubicin(in) + ATP + H2O = daunorubicin(out) + ADP + phosphate + H(+). Functionally, energy-dependent efflux transporter responsible for decreased drug accumulation in multidrug-resistant cells. Specifically present in limbal stem cells, where it plays a key role in corneal development and repair. The protein is ATP-binding cassette sub-family B member 5 of Homo sapiens (Human).